Here is a 577-residue protein sequence, read N- to C-terminus: Cryptochrome DASH, chloroplastic/mitochondrial (577 aa).

Residues 1–53 constitute a chloroplast and mitochondrion transit peptide; the sequence is MIKQPFLLTKFTPFSSKSKHTLFTFHCNFSIKMASLTARTTPTVQNVPGLTPE. Positions 78-219 constitute a Photolyase/cryptochrome alpha/beta domain; sequence GVAIVWFRND…GNDPGSGNTT (142 aa). A disordered region spans residues 550–577; it reads TKKTGDSKTAFSSRRGRPEDNRRKRHGY.

The protein belongs to the DNA photolyase class-1 family. FAD is required as a cofactor. (6R)-5,10-methylene-5,6,7,8-tetrahydrofolate serves as cofactor. As to expression, expressed in the endosperm and embryo 96 hours after seed imbibition. In the embryo, detected in the root meristem, the root cap, the shoot apical meristem and the epidermis of cotyledons. In adult plants, detcted in roots, the whole leaf lamina, the stem and in glandular trichomes.

It localises to the plastid. The protein localises to the chloroplast. It is found in the mitochondrion. In terms of biological role, may have a photoreceptor function and might bind ss- and ds-DNA in a sequence non-specific manner. Lacks photolyase activity. Has a potential role in detecting the dawn and dusk transitions and, consequently, in circadian input pathways. In Solanum lycopersicum (Tomato), this protein is Cryptochrome DASH, chloroplastic/mitochondrial.